The following is a 204-amino-acid chain: DNA-directed RNA polymerase subunit gamma (204 aa).

Zn(2+) is bound by residues Cys-34, Cys-36, Cys-49, and Cys-52.

This sequence belongs to the RNA polymerase beta' chain family. RpoC1 subfamily. In cyanobacteria the RNAP catalytic core is composed of 2 alpha, 1 beta, 1 beta', 1 gamma and 1 omega subunit. When a sigma factor is associated with the core the holoenzyme is formed, which can initiate transcription. Zn(2+) is required as a cofactor.

The enzyme catalyses RNA(n) + a ribonucleoside 5'-triphosphate = RNA(n+1) + diphosphate. Its function is as follows. DNA-dependent RNA polymerase catalyzes the transcription of DNA into RNA using the four ribonucleoside triphosphates as substrates. This Prochlorococcus marinus (strain DV1) protein is DNA-directed RNA polymerase subunit gamma (rpoC1).